We begin with the raw amino-acid sequence, 463 residues long: Glycerol-3-phosphate acyltransferase, chloroplastic (463 aa).

The N-terminal 91 residues, 1–91 (MSIFFSPSSP…AATQPSAGSD (91 aa)), are a transit peptide targeting the chloroplast. Disordered stretches follow at residues 18-37 (NANP…TPPL) and 65-95 (AETV…HGHS). Composition is skewed to low complexity over residues 24–37 (SPSS…TPPL) and 74–90 (PSPS…SAGS). Positions 229–234 (HQTEAD) match the HXXXXD motif motif.

It belongs to the GPAT/DAPAT family.

It localises to the plastid. Its subcellular location is the chloroplast stroma. The enzyme catalyses sn-glycerol 3-phosphate + an acyl-CoA = a 1-acyl-sn-glycero-3-phosphate + CoA. It participates in phospholipid metabolism; CDP-diacylglycerol biosynthesis; CDP-diacylglycerol from sn-glycerol 3-phosphate: step 1/3. In terms of biological role, esterifies acyl-group from acyl-ACP to the sn-1 position of glycerol-3-phosphate. The enzyme from chilling-resistant plants discriminates against non-fluid palmitic acid and selects oleic acid whereas the enzyme from sensitive plants accepts both fatty acids. The protein is Glycerol-3-phosphate acyltransferase, chloroplastic of Carthamus tinctorius (Safflower).